A 276-amino-acid chain; its full sequence is Large ribosomal subunit protein uL2 (276 aa).

2 disordered regions span residues 1–50 (MPIK…GRVT) and 206–276 (GKAG…SKKR). Over residues 7–19 (RPTTPTRRFQTVV) the composition is skewed to polar residues. Residues 20–38 (SREDITKQTPEKSLVESKK) show a composition bias toward basic and acidic residues.

Belongs to the universal ribosomal protein uL2 family. In terms of assembly, part of the 50S ribosomal subunit. Forms a bridge to the 30S subunit in the 70S ribosome.

Functionally, one of the primary rRNA binding proteins. Required for association of the 30S and 50S subunits to form the 70S ribosome, for tRNA binding and peptide bond formation. It has been suggested to have peptidyltransferase activity; this is somewhat controversial. Makes several contacts with the 16S rRNA in the 70S ribosome. The sequence is that of Large ribosomal subunit protein uL2 from Solibacter usitatus (strain Ellin6076).